The chain runs to 119 residues: MTQQGAALQNYNNELVKCIEELCQKREELCRQIQQEEDEKQRLQNEVRQLTEKLARVNENLARKIASRNEFDRTIAETEAAYLKILESSQTLLSVLKREAGNLTKATASDQKSSGGKDS.

An N-acetylthreonine modification is found at T2. Positions 2-32 are important for localization to the centrosome; the sequence is TQQGAALQNYNNELVKCIEELCQKREELCRQ. A coiled-coil region spans residues 13-70; sequence NELVKCIEELCQKREELCRQIQQEEDEKQRLQNEVRQLTEKLARVNENLARKIASRNE.

The protein belongs to the SSNA1 family. In terms of assembly, self-associates to form fibrils. Also forms dimers as well as monomers. Interacts with SPAST.

The protein localises to the nucleus. Its subcellular location is the cytoplasm. The protein resides in the cytoskeleton. It localises to the microtubule organizing center. It is found in the centrosome. The protein localises to the centriole. Its subcellular location is the midbody. The protein resides in the flagellum basal body. It localises to the flagellum axoneme. It is found in the cell projection. The protein localises to the axon. Its function is as follows. Microtubule-binding protein which stabilizes dynamic microtubules by slowing growth and shrinkage at both plus and minus ends and serves as a sensor of microtubule damage, protecting microtubules from the microtubule-severing enzyme SPAST. Induces microtubule branching which is mediated by the formation of long SSNA1 fibrils which guide microtubule protofilaments to split apart from the mother microtubule and form daughter microtubules. Plays a role in axon outgrowth and branching. Required for cell division. The polypeptide is Microtubule nucleation factor SSNA1 (Mus musculus (Mouse)).